We begin with the raw amino-acid sequence, 366 residues long: 8-hydroxyquercetin 8-O-methyltransferase (366 aa).

S-adenosyl-L-methionine-binding positions include 207-210 (VGGG), 231-232 (DL), 251-252 (DM), and Lys-265. Catalysis depends on His-269, which acts as the Proton acceptor.

It belongs to the class I-like SAM-binding methyltransferase superfamily. Cation-independent O-methyltransferase family. COMT subfamily. In terms of assembly, homodimer.

It carries out the reaction 3,3',4',5,7,8-hexahydroxyflavone + S-adenosyl-L-methionine = 3,3',4',5,7-pentahydroxy-8-methoxyflavone + S-adenosyl-L-homocysteine + H(+). The catalysed reaction is 4',7,8-trihydroxyflavone + S-adenosyl-L-methionine = 4',7-dihydroxy-8-methoxyflavone + S-adenosyl-L-homocysteine + H(+). It catalyses the reaction 8-hydroxy-7-methoxyflavone + S-adenosyl-L-methionine = 7,8-dimethoxyflavone + S-adenosyl-L-homocysteine + H(+). It participates in flavonoid metabolism. Functionally, flavonoid 8-O-methyltransferase involved in the biosynthesis of polymethoxylated flavonoids natural products such as pebrellin, aroma compounds which contribute to the flavor of peppermint, and exhibit pharmacological activities such as anti-allergic, anti-oxidant, antibacterial, anti-proliferative, and anti-inflammatory effects. Catalyzes S-adenosylmethionine-dependent regioselective 8-O-methylation of flavonoids; active on various hydroxylated flavonoid substrates, including 7,8,3'4'-tetrahydroxy-flavone, 7,8,4'-trihydroxy-flavone and 8-hydroxy-flavone 7-methyl ether. The polypeptide is 8-hydroxyquercetin 8-O-methyltransferase (Mentha piperita (Peppermint)).